The primary structure comprises 377 residues: Phosphoserine aminotransferase (377 aa).

Residue arginine 43 participates in L-glutamate binding. Positions 105, 164, 189, and 212 each coordinate pyridoxal 5'-phosphate. Lysine 213 carries the N6-(pyridoxal phosphate)lysine modification. Asparagine 254–threonine 255 contributes to the pyridoxal 5'-phosphate binding site.

Belongs to the class-V pyridoxal-phosphate-dependent aminotransferase family. SerC subfamily. As to quaternary structure, homodimer. Requires pyridoxal 5'-phosphate as cofactor.

It localises to the cytoplasm. The catalysed reaction is O-phospho-L-serine + 2-oxoglutarate = 3-phosphooxypyruvate + L-glutamate. The enzyme catalyses 4-(phosphooxy)-L-threonine + 2-oxoglutarate = (R)-3-hydroxy-2-oxo-4-phosphooxybutanoate + L-glutamate. It participates in amino-acid biosynthesis; L-serine biosynthesis; L-serine from 3-phospho-D-glycerate: step 2/3. The protein operates within cofactor biosynthesis; pyridoxine 5'-phosphate biosynthesis; pyridoxine 5'-phosphate from D-erythrose 4-phosphate: step 3/5. Its function is as follows. Catalyzes the reversible conversion of 3-phosphohydroxypyruvate to phosphoserine and of 3-hydroxy-2-oxo-4-phosphonooxybutanoate to phosphohydroxythreonine. The sequence is that of Phosphoserine aminotransferase from Bordetella bronchiseptica (strain ATCC BAA-588 / NCTC 13252 / RB50) (Alcaligenes bronchisepticus).